Reading from the N-terminus, the 458-residue chain is Putative U-box domain-containing protein 46 (458 aa).

Positions 71–144 (EVPKEFICTL…TQWCLVNKYD (74 aa)) constitute a U-box domain. 2 ARM repeats span residues 241 to 281 (ESNK…SLSA) and 283 to 322 (DSNKIIIGNSEAVKALIDLIEEGDLLATKEATSTVFNLCI).

The catalysed reaction is S-ubiquitinyl-[E2 ubiquitin-conjugating enzyme]-L-cysteine + [acceptor protein]-L-lysine = [E2 ubiquitin-conjugating enzyme]-L-cysteine + N(6)-ubiquitinyl-[acceptor protein]-L-lysine.. It participates in protein modification; protein ubiquitination. Functionally, functions as an E3 ubiquitin ligase. This is Putative U-box domain-containing protein 46 (PUB46) from Arabidopsis thaliana (Mouse-ear cress).